A 397-amino-acid chain; its full sequence is Pectate lyase 2 (397 aa).

A signal peptide spans 1 to 25; it reads MGIKQCCYILYFTLALVALLQPVRS. An N-linked (GlcNAc...) asparagine glycan is attached at asparagine 37. Cysteines 54 and 71 form a disulfide. Ca(2+) is bound by residues aspartate 194, aspartate 218, and aspartate 222. Arginine 274 is an active-site residue.

It belongs to the polysaccharide lyase 1 family. Amb a subfamily. Monomer. Ca(2+) is required as a cofactor. The N-terminus is blocked. Pollen and flowers.

It catalyses the reaction Eliminative cleavage of (1-&gt;4)-alpha-D-galacturonan to give oligosaccharides with 4-deoxy-alpha-D-galact-4-enuronosyl groups at their non-reducing ends.. The protein operates within glycan metabolism; pectin degradation; 2-dehydro-3-deoxy-D-gluconate from pectin: step 2/5. Its function is as follows. Has pectate lyase activity. The protein is Pectate lyase 2 of Ambrosia artemisiifolia (Common ragweed).